Reading from the N-terminus, the 21-residue chain is Formate ester dehydrogenase beta chain (21 aa).

As to quaternary structure, heterotrimer composed of an alpha, a beta and a gamma chain.

The protein is Formate ester dehydrogenase beta chain of Amycolatopsis methanolica.